The sequence spans 347 residues: D-alanine--D-alanine ligase (347 aa).

The region spanning 131–333 (KRVLESAGIA…YPELIERLVD (203 aa)) is the ATP-grasp domain. ATP is bound at residue 161–216 (EEKLAYPVFAKPSNMGSSVGISKSENQEELRQALKLAFRYDSRVLVEQGVNAREIE). Mg(2+) contacts are provided by Asp-287, Glu-300, and Asn-302.

Belongs to the D-alanine--D-alanine ligase family. Mg(2+) is required as a cofactor. Mn(2+) serves as cofactor.

The protein localises to the cytoplasm. The enzyme catalyses 2 D-alanine + ATP = D-alanyl-D-alanine + ADP + phosphate + H(+). Its pathway is cell wall biogenesis; peptidoglycan biosynthesis. Functionally, cell wall formation. This Streptococcus pneumoniae (strain P1031) protein is D-alanine--D-alanine ligase.